Here is a 266-residue protein sequence, read N- to C-terminus: Receptor-like protein 5 (266 aa).

The first 19 residues, 1-19 (MINYRHIVFCLCVMVVVDS), serve as a signal peptide directing secretion. The Extracellular portion of the chain corresponds to 20-169 (RLTPYLAAIE…PTRNKNKPTV (150 aa)). LRR repeat units follow at residues 93–117 (LTSL…ITKL) and 119–143 (NLTI…IVIL). An N-linked (GlcNAc...) asparagine glycan is attached at Asn119. Residues 170–190 (LVLLLGILVGLVVAGGASFGF) form a helical membrane-spanning segment. Topologically, residues 191 to 266 (YLYRIRKQPK…TNQNPHLPYM (76 aa)) are cytoplasmic.

It belongs to the RLP family.

The protein resides in the cell membrane. In Arabidopsis thaliana (Mouse-ear cress), this protein is Receptor-like protein 5.